A 58-amino-acid chain; its full sequence is Potassium channel toxin alpha-KTx BmKcug1a (58 aa).

Positions 1–21 (MKISFLLLLAIVICSIGWTEA) are cleaved as a signal peptide. Pyrrolidone carboxylic acid is present on Gln22. 3 disulfides stabilise this stretch: Cys28-Cys49, Cys34-Cys54, and Cys38-Cys56.

Belongs to the short scorpion toxin superfamily. Potassium channel inhibitor family. Alpha-KTx 01 subfamily. As to expression, expressed by the venom gland.

Its subcellular location is the secreted. In terms of biological role, potent blocker of both large-conductance calcium-activated potassium channels (KCa1.1/KCNMA1) and voltage-gated potassium channels (Kv1.3/KCNA3 and ERG1/Kv11.1/KCNH2). The chain is Potassium channel toxin alpha-KTx BmKcug1a from Olivierus martensii (Manchurian scorpion).